The primary structure comprises 334 residues: MSTQEATLQQPLLQAIDLKKHYPVKKGMFAPERLVKALDGVSFNLERGKTLAVVGESGCGKSTLGRLLTMIEMPTGGELYYQGQDLLKHDPQAQKLRRQKIQIVFQNPYGSLNPRKKVGQILEEPLLINTSLSKEQRREKALSMMAKVGLKTEHYDRYPHMFSGGQRQRIAIARGLMLDPDVVIADEPVSALDVSVRAQVLNLMMDLQQELGLSYVFISHDLSVVEHIADEVMVMYLGRCVEKGTKDQIFNNPRHPYTQALLSATPRLNPDDRRERIKLSGELPSPLNPPPGCAFNARCRRRFGPCTQLQPQLKDYGGQLVACFAVDQDENPQR.

The 250-residue stretch at 13-262 (LQAIDLKKHY…PRHPYTQALL (250 aa)) folds into the ABC transporter domain. 55 to 62 (GESGCGKS) contributes to the ATP binding site.

The protein belongs to the ABC transporter superfamily. As to quaternary structure, the complex is composed of two ATP-binding proteins (DppD and DppF), two transmembrane proteins (DppB and DppC) and a solute-binding protein (DppA). MppA can replace DppA as binding protein for heme and ALA transport.

It is found in the cell inner membrane. It catalyses the reaction a dipeptide(out) + ATP + H2O = a dipeptide(in) + ADP + phosphate + H(+). Part of the ABC transporter DppABCDF involved in dipeptide transport. Responsible for energy coupling to the transport system. In terms of biological role, when a foreign outer membrane heme receptor is expressed in E.coli, DppABCDF can also transport heme and its precursor, 5-aminolevulinic acid (ALA), from the periplasm into the cytoplasm. The chain is Dipeptide transport ATP-binding protein DppF (dppF) from Escherichia coli (strain K12).